The primary structure comprises 737 residues: Serine/threonine-protein kinase dst1 (737 aa).

In terms of domain architecture, Protein kinase spans 29–281 (YHIQERLGKG…AKELLNHEFI (253 aa)). Residues 35–43 (LGKGSFGQV) and K58 each bind ATP. The Proton acceptor role is filled by D149. 4 disordered regions span residues 305–356 (SMFE…SNNY), 372–475 (KDDA…TTDQ), 491–559 (KPIT…ISNN), and 575–631 (NNNI…ESLS). Low complexity-rich tracts occupy residues 334 to 345 (NNNTVTNYSTVI), 401 to 410 (SSCSSSSSSS), 425 to 444 (PITNSPKISPISSNNINKIP), and 454 to 473 (ATTTTTTTTTTTTTAASTTT). The span at 491-503 (KPITSSNSTSVTP) shows a compositional bias: polar residues. Residues 510–525 (SNNTTTTSNINTPIKP) are compositionally biased toward low complexity. Polar residues-rich tracts occupy residues 529–554 (LKKSNSNTPVQLKTSGDKTPTTTPLK) and 585–596 (SPTTGQKIIKTN). The segment covering 597–615 (SGGVLKSSGGLSSKRSPSS) has biased composition (low complexity).

The protein belongs to the protein kinase superfamily. STE Ser/Thr protein kinase family. STE20 subfamily. Mg(2+) serves as cofactor.

The enzyme catalyses L-seryl-[protein] + ATP = O-phospho-L-seryl-[protein] + ADP + H(+). The catalysed reaction is L-threonyl-[protein] + ATP = O-phospho-L-threonyl-[protein] + ADP + H(+). This chain is Serine/threonine-protein kinase dst1, found in Dictyostelium discoideum (Social amoeba).